The chain runs to 314 residues: GDP-L-fucose synthase (314 aa).

NADP(+) is bound by residues glycine 15–glycine 21 and leucine 109–serine 112. The Proton donor/acceptor role is filled by tyrosine 140. NADP(+) is bound by residues lysine 144, proline 167–leucine 170, and histidine 183. Substrate is bound by residues lysine 191, tryptophan 206, arginine 213, and aspartate 273.

This sequence belongs to the NAD(P)-dependent epimerase/dehydratase family. Fucose synthase subfamily.

It carries out the reaction GDP-beta-L-fucose + NADP(+) = GDP-4-dehydro-alpha-D-rhamnose + NADPH + H(+). The protein operates within nucleotide-sugar biosynthesis; GDP-L-fucose biosynthesis via de novo pathway; GDP-L-fucose from GDP-alpha-D-mannose: step 2/2. Catalyzes the two-step NADP-dependent conversion of GDP-4-dehydro-6-deoxy-D-mannose to GDP-fucose, involving an epimerase and a reductase reaction. This chain is GDP-L-fucose synthase, found in Sinorhizobium fredii (strain NBRC 101917 / NGR234).